The following is a 709-amino-acid chain: UvrABC system protein B (709 aa).

Residues 35–416 form the Helicase ATP-binding domain; the sequence is ERVEAGEKDV…YELGQADGYV (382 aa). Residue 48 to 55 participates in ATP binding; the sequence is GATGTGKS. The Beta-hairpin motif lies at 101-124; that stretch reads YYDYYQPEAYVPQTDTFIEKDSSI. The Helicase C-terminal domain maps to 438–604; sequence QIDDLLEQIR…PLRKRIADIT (167 aa). The UVR domain maps to 666–701; it reads ADLIEQMSQQMHQAAADLQFELAARLRDEVGELKKE.

The protein belongs to the UvrB family. In terms of assembly, forms a heterotetramer with UvrA during the search for lesions. Interacts with UvrC in an incision complex.

Its subcellular location is the cytoplasm. Its function is as follows. The UvrABC repair system catalyzes the recognition and processing of DNA lesions. A damage recognition complex composed of 2 UvrA and 2 UvrB subunits scans DNA for abnormalities. Upon binding of the UvrA(2)B(2) complex to a putative damaged site, the DNA wraps around one UvrB monomer. DNA wrap is dependent on ATP binding by UvrB and probably causes local melting of the DNA helix, facilitating insertion of UvrB beta-hairpin between the DNA strands. Then UvrB probes one DNA strand for the presence of a lesion. If a lesion is found the UvrA subunits dissociate and the UvrB-DNA preincision complex is formed. This complex is subsequently bound by UvrC and the second UvrB is released. If no lesion is found, the DNA wraps around the other UvrB subunit that will check the other stand for damage. This Micrococcus luteus (strain ATCC 4698 / DSM 20030 / JCM 1464 / CCM 169 / CCUG 5858 / IAM 1056 / NBRC 3333 / NCIMB 9278 / NCTC 2665 / VKM Ac-2230) (Micrococcus lysodeikticus) protein is UvrABC system protein B.